Reading from the N-terminus, the 392-residue chain is Selenide, water dikinase 1 (392 aa).

S2 carries the post-translational modification N-acetylserine. The active site involves C31. ATP-binding positions include K32, 67–69 (GMD), D87, D110, and 161–164 (GGQT). Residue D69 coordinates Mg(2+). D110 contributes to the Mg(2+) binding site. D265 contacts Mg(2+).

The protein belongs to the selenophosphate synthase 1 family. Class II subfamily. Homodimer. Heterodimer with isoform 3. As to quaternary structure, homodimer. Heterodimer with isoform 4. In terms of assembly, homodimer. Heterodimer with isoform 1. Homodimer. Heterodimer with isoform 2. Mg(2+) serves as cofactor. Gradually expressed during the cell cycle until G2/M phase and then decreases. In terms of tissue distribution, gradually expressed during the cell cycle until S phase and then decreases.

It localises to the cell membrane. Its subcellular location is the nucleus membrane. It is found in the cytoplasm. The enzyme catalyses hydrogenselenide + ATP + H2O = selenophosphate + AMP + phosphate + 2 H(+). Its activity is regulated as follows. Activated by phosphate ions and by potassium ions. Synthesizes selenophosphate from selenide and ATP. This chain is Selenide, water dikinase 1 (SEPHS1), found in Homo sapiens (Human).